A 243-amino-acid chain; its full sequence is Triosephosphate isomerase (243 aa).

Position 9 to 11 (9 to 11 (NWK)) interacts with substrate. H98 acts as the Electrophile in catalysis. The active-site Proton acceptor is the E167. Residues G173, S205, and 226-227 (GG) contribute to the substrate site.

The protein belongs to the triosephosphate isomerase family. In terms of assembly, homodimer.

It is found in the cytoplasm. It catalyses the reaction D-glyceraldehyde 3-phosphate = dihydroxyacetone phosphate. It functions in the pathway carbohydrate biosynthesis; gluconeogenesis. It participates in carbohydrate degradation; glycolysis; D-glyceraldehyde 3-phosphate from glycerone phosphate: step 1/1. Its function is as follows. Involved in the gluconeogenesis. Catalyzes stereospecifically the conversion of dihydroxyacetone phosphate (DHAP) to D-glyceraldehyde-3-phosphate (G3P). The sequence is that of Triosephosphate isomerase from Mesomycoplasma hyorhinis (Mycoplasma hyorhinis).